Consider the following 382-residue polypeptide: ATP phosphoribosyltransferase regulatory subunit (382 aa).

This sequence belongs to the class-II aminoacyl-tRNA synthetase family. HisZ subfamily. As to quaternary structure, heteromultimer composed of HisG and HisZ subunits.

The protein localises to the cytoplasm. It functions in the pathway amino-acid biosynthesis; L-histidine biosynthesis; L-histidine from 5-phospho-alpha-D-ribose 1-diphosphate: step 1/9. In terms of biological role, required for the first step of histidine biosynthesis. May allow the feedback regulation of ATP phosphoribosyltransferase activity by histidine. This chain is ATP phosphoribosyltransferase regulatory subunit, found in Burkholderia multivorans (strain ATCC 17616 / 249).